A 420-amino-acid polypeptide reads, in one-letter code: Glutamate dehydrogenase (420 aa).

The active site involves K105. Position 220–226 (220–226 (GYGNAGY)) interacts with NAD(+).

This sequence belongs to the Glu/Leu/Phe/Val dehydrogenases family. As to quaternary structure, homohexamer.

Its subcellular location is the cytoplasm. It catalyses the reaction L-glutamate + NAD(+) + H2O = 2-oxoglutarate + NH4(+) + NADH + H(+). It carries out the reaction L-glutamate + NADP(+) + H2O = 2-oxoglutarate + NH4(+) + NADPH + H(+). This is Glutamate dehydrogenase (gdhA) from Pyrococcus abyssi (strain GE5 / Orsay).